The primary structure comprises 225 residues: Cell division protein SepF (225 aa).

The tract at residues 21–134 (DEYLDEPEPT…GPLFDEGGPL (114 aa)) is disordered. Basic and acidic residues-rich tracts occupy residues 28-54 (EPTR…RDFA), 77-86 (RYESPRHSSR), and 115-127 (TRSD…RGPL).

The protein belongs to the SepF family. Homodimer. Interacts with FtsZ.

The protein localises to the cytoplasm. In terms of biological role, cell division protein that is part of the divisome complex and is recruited early to the Z-ring. Probably stimulates Z-ring formation, perhaps through the cross-linking of FtsZ protofilaments. Its function overlaps with FtsA. The polypeptide is Cell division protein SepF (Rhodococcus opacus (strain B4)).